A 199-amino-acid polypeptide reads, in one-letter code: 5'-deoxynucleotidase YfbR (199 aa).

Substrate contacts are provided by residues 18–19 (RW) and histidine 33. An HD domain is found at 30–142 (VSEHSLQVAM…VKQADALCAY (113 aa)). The a divalent metal cation site is built by histidine 33, histidine 68, and aspartate 69. Substrate-binding positions include aspartate 69, 77–80 (DLPT), and aspartate 137. Aspartate 137 provides a ligand contact to a divalent metal cation.

The protein belongs to the 5DNU family. Homodimer. A divalent metal cation is required as a cofactor.

Its subcellular location is the cytoplasm. The enzyme catalyses a 2'-deoxyribonucleoside 5'-phosphate + H2O = a 2'-deoxyribonucleoside + phosphate. Catalyzes the strictly specific dephosphorylation of 2'-deoxyribonucleoside 5'-monophosphates. In Shigella flexneri serotype 5b (strain 8401), this protein is 5'-deoxynucleotidase YfbR.